We begin with the raw amino-acid sequence, 552 residues long: Steroid transmembrane transporter SLC22A24 (552 aa).

The next 12 helical transmembrane spans lie at 16–36 (FQILQIAFFFVTSMITYTHIL), 144–164 (LKSVVQTLFMSGSLLGGLMFG), 175–197 (IYTWCLLQTAIADTCAIFAPTFV), 201–220 (IFRFLAGLTTINIMTNAFIL), 232–252 (IGITLILCSYSIGQMLLGGLA), 255–275 (IRDWYTLHLTVSIPLFVLSLL), 349–369 (IICFLSFIRLGASVPFMGLIL), 371–391 (LQDLGSSIFLFQVLFGAITFI), 407–427 (INQSLFFFLVGLCILVNTFLS), 435–455 (VVLATLGIGTVSAANATFFVH), 474–494 (VFSRMGSVLAPLLMTLVVYSP), and 496–516 (LPWVMYGVFPILAGLIVFCLP).

Belongs to the major facilitator (TC 2.A.1) superfamily. Organic cation transporter (TC 2.A.1.19) family.

The protein localises to the cell membrane. The enzyme catalyses estrone 3-sulfate(out) + glutarate(in) = estrone 3-sulfate(in) + glutarate(out). It catalyses the reaction 17beta-estradiol 17-O-(beta-D-glucuronate)(out) + glutarate(in) = 17beta-estradiol 17-O-(beta-D-glucuronate)(in) + glutarate(out). It carries out the reaction taurocholate(out) + glutarate(in) = taurocholate(in) + glutarate(out). The catalysed reaction is 5alpha-androstane-3alpha,17beta-diol 3-O-(beta-D-glucuronate)(out) + glutarate(in) = 5alpha-androstane-3alpha,17beta-diol 3-O-(beta-D-glucuronate)(in) + glutarate(out). The enzyme catalyses glycocholate(out) + glutarate(in) = glycocholate(in) + glutarate(out). It catalyses the reaction dehydroepiandrosterone 3-sulfate(out) + glutarate(in) = dehydroepiandrosterone 3-sulfate(in) + glutarate(out). It carries out the reaction glutarate(in) + succinate(out) = glutarate(out) + succinate(in). In terms of biological role, renal transmembrane organic anion/dicarboxylate exchanger that participates in the reabsorption of conjugated steroids, as well as bile acids, driven by an outward gradient of dicarboxylates such as glutarate or succinate. Transports androstanediol glucuronide (5alpha-androstane-3alpha,17beta-diol 3-O-(beta-D-glucuronate)), estrone 3-sulfate, and estradiol-17-glucuronide (17beta-estradiol 17-O-(beta-D-glucuronate)), and taurocholate. The polypeptide is Steroid transmembrane transporter SLC22A24 (Oryctolagus cuniculus (Rabbit)).